Here is a 740-residue protein sequence, read N- to C-terminus: NAD(P)H-quinone oxidoreductase subunit 5, chloroplastic (740 aa).

Helical transmembrane passes span 9–29 (WIIPFIPLPVPMLIGAGLILF), 40–60 (WAFQSVLLLSIVMVFSIYLSI), 89–109 (IDPLTSIMSILITTVGIMVLI), 125–145 (FAYMSFFSTSMLGLVTSSNLI), 147–167 (IYIFWELVGLCSYLLIGFWFT), 185–205 (GDFGLLLGILGFYWITGSFEF), 219–239 (NEVDFLFVTLCAVLLFAGAVA), 258–278 (TPISALIHAATMVAAGIFLVA), 286–306 (VIPYIMYLISVIGIITVLLGA), 327–347 (LGYMMLALGMGSYRSALFHLI), 354–374 (ALLFLGSGSIIHSMETIVGYS), 396–416 (ITFLLGTLSLCGIPPLACFWS), 425–445 (WLYSPIFAIIAWATAGLTAFY), 543–563 (LFPIFVLGLFTLFVGSLGIPF), 602–622 (VLSVSIAYFGIFIASFLYKPI), and 717–737 (SYLFLYLAYVLVFLLVYYLLF).

Belongs to the complex I subunit 5 family. NDH is composed of at least 16 different subunits, 5 of which are encoded in the nucleus.

It is found in the plastid. Its subcellular location is the chloroplast thylakoid membrane. The enzyme catalyses a plastoquinone + NADH + (n+1) H(+)(in) = a plastoquinol + NAD(+) + n H(+)(out). It carries out the reaction a plastoquinone + NADPH + (n+1) H(+)(in) = a plastoquinol + NADP(+) + n H(+)(out). Functionally, NDH shuttles electrons from NAD(P)H:plastoquinone, via FMN and iron-sulfur (Fe-S) centers, to quinones in the photosynthetic chain and possibly in a chloroplast respiratory chain. The immediate electron acceptor for the enzyme in this species is believed to be plastoquinone. Couples the redox reaction to proton translocation, and thus conserves the redox energy in a proton gradient. The sequence is that of NAD(P)H-quinone oxidoreductase subunit 5, chloroplastic (ndhF) from Nicotiana tomentosiformis (Tobacco).